Reading from the N-terminus, the 195-residue chain is Fe/S biogenesis protein NfuA (195 aa).

[4Fe-4S] cluster is bound by residues cysteine 152 and cysteine 155.

It belongs to the NfuA family. In terms of assembly, homodimer. It depends on [4Fe-4S] cluster as a cofactor.

In terms of biological role, involved in iron-sulfur cluster biogenesis. Binds a 4Fe-4S cluster, can transfer this cluster to apoproteins, and thereby intervenes in the maturation of Fe/S proteins. Could also act as a scaffold/chaperone for damaged Fe/S proteins. In Vibrio cholerae serotype O1 (strain ATCC 39541 / Classical Ogawa 395 / O395), this protein is Fe/S biogenesis protein NfuA.